Here is a 495-residue protein sequence, read N- to C-terminus: Geraniol 8-hydroxylase (495 aa).

The helical transmembrane segment at 5–25 (FLTIAIGFLFTITLYQALNFF) threads the bilayer. C438 is a binding site for heme.

The protein belongs to the cytochrome P450 family. Heme is required as a cofactor. As to expression, expressed in leaves, stems and roots.

Its subcellular location is the endoplasmic reticulum membrane. The catalysed reaction is (2E)-geraniol + reduced [NADPH--hemoprotein reductase] + O2 = (6E)-8-hydroxygeraniol + oxidized [NADPH--hemoprotein reductase] + H2O + H(+). Functionally, hydroxylase involved in the biosynthesis of hydroxygeraniol, a precursor of the iridoid monoterpenoid swertiamarin. In Swertia mussotii (Felwort), this protein is Geraniol 8-hydroxylase (CYP76B10).